Consider the following 182-residue polypeptide: CDP-diacylglycerol--glycerol-3-phosphate 3-phosphatidyltransferase (182 aa).

At 1–12 (MQLNIPTWLTLF) the chain is on the cytoplasmic side. Residues 13–37 (RVVLIPFFVLAFYLPFVWAPMVCAI) traverse the membrane as a helical segment. The Periplasmic portion of the chain corresponds to 38–60 (IFVFAAATDWFDGFLARRWKQTT). The helical transmembrane segment at 61–81 (RFGAFLDPVADKVMVAVALVL) threads the bilayer. The Cytoplasmic segment spans residues 82-86 (VAEHY). Residues 87–107 (HSWWITLPAATMIAREIIISS) traverse the membrane as a helical segment. The Periplasmic portion of the chain corresponds to 108-145 (LREWMAEIGKRSSVAVSWVGKVKTMAQMGSLVGLLWRP). A helical transmembrane segment spans residues 146–168 (DHNVELASFVLLYIAAVLTFWSM). Residues 169 to 181 (FQYLNAAWSDLLE) lie on the Cytoplasmic side of the membrane.

It belongs to the CDP-alcohol phosphatidyltransferase class-I family.

It localises to the cell inner membrane. The enzyme catalyses a CDP-1,2-diacyl-sn-glycerol + sn-glycerol 3-phosphate = a 1,2-diacyl-sn-glycero-3-phospho-(1'-sn-glycero-3'-phosphate) + CMP + H(+). The protein operates within phospholipid metabolism; phosphatidylglycerol biosynthesis; phosphatidylglycerol from CDP-diacylglycerol: step 1/2. Its function is as follows. Catalyzes the conversion of cytidine diphosphate diacylglycerol (CDP-DG) and glycerol 3-phosphate into phosphatidylglycerol. Essential for the synthesis of anionic phospholipids, thereby playing a role in balancing the ratio of zwitterionic and anionic phospholipids, which is thought to be important for normal membrane function. This Yersinia pestis bv. Antiqua (strain Antiqua) protein is CDP-diacylglycerol--glycerol-3-phosphate 3-phosphatidyltransferase.